Here is a 1187-residue protein sequence, read N- to C-terminus: Protein WWC2 (1187 aa).

WW domains are found at residues 10–43 (LPLP…DPRD) and 57–90 (DELP…DPRK). 2 coiled-coil regions span residues 121 to 194 (KEQR…YKQQ) and 224 to 256 (ELKS…FHLD). Ser286 is subject to Phosphoserine. Positions 302–423 (LAEKVRLSLQ…EETTKLTTSL (122 aa)) form a coiled coil. A disordered region spans residues 438-464 (SSGSSLGSLASSRGSLNTSSRGSLNSL). The 124-residue stretch at 697-820 (ETAQVQIGLR…FSNEIFMLWY (124 aa)) folds into the C2 domain. Disordered regions lie at residues 830–849 (CKKN…QPML) and 874–963 (ELAQ…ETNT). Residues 859–885 (ALLARTSAELLAVEQELAQEEEEEELR) adopt a coiled-coil conformation. Residues 875-884 (LAQEEEEEEL) are compositionally biased toward acidic residues. At Thr999 the chain carries Phosphothreonine. Residue Ser1017 is modified to Phosphoserine. An interaction with PRKCZ region spans residues 1026-1045 (SLFVRNSTERRSLRVKRAVC). The stretch at 1063–1143 (DLELDLQASL…DLNAERLMRQ (81 aa)) forms a coiled coil.

Belongs to the WWC family. Forms homodimers and heterodimers with WWC1 and WWC3. Interacts with DLC1 and PRKCZ. Interacts (via WW domains) with LATS1 and LATS2.

It is found in the cytoplasm. The protein resides in the cytosol. Regulator of the Hippo signaling pathway, also known as the Salvador-Warts-Hippo (SWH) pathway. Enhances phosphorylation of LATS1 and YAP1 and negatively regulates cell proliferation and organ growth due to a suppression of the transcriptional activity of YAP1, the major effector of the Hippo pathway. The chain is Protein WWC2 (Wwc2) from Mus musculus (Mouse).